A 307-amino-acid chain; its full sequence is UDP-N-acetylenolpyruvoylglucosamine reductase (307 aa).

The FAD-binding PCMH-type domain occupies T33–G197. Residue R176 is part of the active site. Catalysis depends on S226, which acts as the Proton donor. The active site involves E296.

The protein belongs to the MurB family. It depends on FAD as a cofactor.

The protein localises to the cytoplasm. It catalyses the reaction UDP-N-acetyl-alpha-D-muramate + NADP(+) = UDP-N-acetyl-3-O-(1-carboxyvinyl)-alpha-D-glucosamine + NADPH + H(+). It functions in the pathway cell wall biogenesis; peptidoglycan biosynthesis. Its function is as follows. Cell wall formation. The sequence is that of UDP-N-acetylenolpyruvoylglucosamine reductase from Staphylococcus aureus (strain COL).